The primary structure comprises 998 residues: MARARPPPPPSPPPGLLPLLPPLLLLPLLLLPAGCRALEETLMDTKWVTSELAWTSHPESGWEEVSGYDEAMNPIRTYQVCNVRESSQNNWLRTGFIWRRDVQRVYVELKFTVRDCNSIPNIPGSCKETFNLFYYEADSDVASASSPFWMENPYVKVDTIAPDESFSRLDAGRVNTKVRSFGPLSKAGFYLAFQDQGACMSLISVRAFYKKCASTTAGFALFPETLTGAEPTSLVIAPGTCIPNAVEVSVPLKLYCNGDGEWMVPVGACTCATGHEPAAKESQCRPCPPGSYKAKQGEGPCLPCPPNSRTTSPAASICTCHNNFYRADSDSADSACTTVPSPPRGVISNVNETSLILEWSEPRDLGGRDDLLYNVICKKCHGAGGASACSRCDDNVEFVPRQLGLTERRVHISHLLAHTRYTFEVQAVNGVSGKSPLPPRYAAVNITTNQAAPSEVPTLRLHSSSGSSLTLSWAPPERPNGVILDYEMKYFEKSEGIASTVTSQMNSVQLDGLRPDARYVVQVRARTVAGYGQYSRPAEFETTSERGSGAQQLQEQLPLIVGSATAGLVFVVAVVVIAIVCLRKQRHGSDSEYTEKLQQYIAPGMKVYIDPFTYEDPNEAVREFAKEIDVSCVKIEEVIGAGEFGEVCRGRLKQPGRREVFVAIKTLKVGYTERQRRDFLSEASIMGQFDHPNIIRLEGVVTKSRPVMILTEFMENCALDSFLRLNDGQFTVIQLVGMLRGIAAGMKYLSEMNYVHRDLAARNILVNSNLVCKVSDFGLSRFLEDDPSDPTYTSSLGGKIPIRWTAPEAIAYRKFTSASDVWSYGIVMWEVMSYGERPYWDMSNQDVINAVEQDYRLPPPMDCPTALHQLMLDCWVRDRNLRPKFSQIVNTLDKLIRNAASLKVIASAQSGMSQPLLDRTVPDYTTFTTVGDWLDAIKMGRYKESFVSAGFASFDLVAQMTAEDLLRIGVTLAGHQKKILSSIQDMRLQMNQTLPVQV.

The first 33 residues, 1–33, serve as a signal peptide directing secretion; sequence MARARPPPPPSPPPGLLPLLPPLLLLPLLLLPA. Residues 34–559 lie on the Extracellular side of the membrane; it reads GCRALEETLM…AQQLQEQLPL (526 aa). The 179-residue stretch at 39-217 folds into the Eph LBD domain; sequence EETLMDTKWV…FYKKCASTTA (179 aa). A disulfide bridge links Cys81 with Cys199. 2 consecutive Fibronectin type-III domains span residues 339–451 and 452–545; these read VPSP…TNQA and APSE…TTSE. N-linked (GlcNAc...) asparagine glycans are attached at residues Asn351 and Asn445. The chain crosses the membrane as a helical span at residues 560-580; that stretch reads IVGSATAGLVFVVAVVVIAIV. Residues 581 to 998 are Cytoplasmic-facing; the sequence is CLRKQRHGSD…QMNQTLPVQV (418 aa). Position 614 is a phosphotyrosine; by autocatalysis (Tyr614). In terms of domain architecture, Protein kinase spans 633-896; it reads VKIEEVIGAG…QIVNTLDKLI (264 aa). Residues 639–647 and Lys665 each bind ATP; that span reads IGAGEFGEV. Asp758 serves as the catalytic Proton acceptor. The SAM domain occupies 925-989; it reads TTFTTVGDWL…LSSIQDMRLQ (65 aa). The PDZ-binding motif lies at 996 to 998; sequence VQV.

Belongs to the protein kinase superfamily. Tyr protein kinase family. Ephrin receptor subfamily. Heterotetramer upon binding of the ligand. The heterotetramer is composed of an ephrin dimer and a receptor dimer. Oligomerization is probably required to induce biological responses. Phosphorylated. Autophosphorylates upon ligand-binding. Autophosphorylation on Tyr-614 is required for interaction with SH2 domain-containing proteins. Post-translationally, ubiquitinated by RNF186, mainly through 'Lys-48' and 'Lys-63'-linked polyubiquitin chains. In terms of tissue distribution, ubiquitous.

The protein localises to the cell membrane. The protein resides in the cell projection. It is found in the dendrite. The catalysed reaction is L-tyrosyl-[protein] + ATP = O-phospho-L-tyrosyl-[protein] + ADP + H(+). In terms of biological role, receptor tyrosine kinase which binds promiscuously transmembrane ephrin-B family ligands residing on adjacent cells, leading to contact-dependent bidirectional signaling into neighboring cells. The signaling pathway downstream of the receptor is referred to as forward signaling while the signaling pathway downstream of the ephrin ligand is referred to as reverse signaling. Generally has an overlapping and redundant function with EPHB2. Like EPHB2, functions in axon guidance during development regulating for instance the neurons forming the corpus callosum and the anterior commissure, 2 major interhemispheric connections between the temporal lobes of the cerebral cortex. In addition to its role in axon guidance also plays an important redundant role with other ephrin-B receptors in development and maturation of dendritic spines and the formation of excitatory synapses. Controls other aspects of development through regulation of cell migration and positioning. This includes angiogenesis, palate development and thymic epithelium development for instance. Forward and reverse signaling through the EFNB2/EPHB3 complex also regulate migration and adhesion of cells that tubularize the urethra and septate the cloaca. Finally, plays an important role in intestinal epithelium differentiation segregating progenitor from differentiated cells in the crypt. This chain is Ephrin type-B receptor 3 (EPHB3), found in Homo sapiens (Human).